The primary structure comprises 129 residues: Ribosome-binding factor A (129 aa).

Belongs to the RbfA family. Monomer. Binds 30S ribosomal subunits, but not 50S ribosomal subunits or 70S ribosomes.

It localises to the cytoplasm. Its function is as follows. One of several proteins that assist in the late maturation steps of the functional core of the 30S ribosomal subunit. Associates with free 30S ribosomal subunits (but not with 30S subunits that are part of 70S ribosomes or polysomes). Required for efficient processing of 16S rRNA. May interact with the 5'-terminal helix region of 16S rRNA. This Marinomonas sp. (strain MWYL1) protein is Ribosome-binding factor A.